A 225-amino-acid chain; its full sequence is Phosphoenolpyruvate guanylyltransferase (225 aa).

T150, G166, and S169 together coordinate phosphoenolpyruvate. Positions P167 to P186 are disordered.

This sequence belongs to the CofC family.

The enzyme catalyses phosphoenolpyruvate + GTP + H(+) = enolpyruvoyl-2-diphospho-5'-guanosine + diphosphate. The protein operates within cofactor biosynthesis; coenzyme F420 biosynthesis. Its function is as follows. Guanylyltransferase that catalyzes the activation of phosphoenolpyruvate (PEP) as enolpyruvoyl-2-diphospho-5'-guanosine, via the condensation of PEP with GTP. It is involved in the biosynthesis of coenzyme F420, a hydride carrier cofactor. The polypeptide is Phosphoenolpyruvate guanylyltransferase (Rhodococcus erythropolis (strain PR4 / NBRC 100887)).